The primary structure comprises 194 residues: Small ribosomal subunit protein eS7 (194 aa).

This sequence belongs to the eukaryotic ribosomal protein eS7 family.

The chain is Small ribosomal subunit protein eS7 (RpS7) from Drosophila melanogaster (Fruit fly).